Reading from the N-terminus, the 86-residue chain is Putative membrane protein insertion efficiency factor (86 aa).

The interval 66–86 is disordered; sequence AGGHDPVPPVPPQRYPSAQEH.

This sequence belongs to the UPF0161 family.

Its subcellular location is the cell inner membrane. In terms of biological role, could be involved in insertion of integral membrane proteins into the membrane. The chain is Putative membrane protein insertion efficiency factor from Nitratidesulfovibrio vulgaris (strain ATCC 29579 / DSM 644 / CCUG 34227 / NCIMB 8303 / VKM B-1760 / Hildenborough) (Desulfovibrio vulgaris).